A 545-amino-acid chain; its full sequence is Mesoderm induction early response protein 2 (545 aa).

S11 carries the phosphoserine modification. Residues 100–189 are disordered; the sequence is DPISDRESEG…SSDTEEDSLP (90 aa). Positions 140 to 153 are enriched in polar residues; the sequence is QSSADDLTPSVTSH. The region spanning 195 to 292 is the ELM2 domain; the sequence is KEIMVGPQFQ…EALRRLRFNV (98 aa). Positions 297 to 349 constitute an SANT domain; sequence DGLCAWSEEECRNFEHGFRVHGKNFHLIQANKVRTRSVGECVEYYYLWKKSER. The tract at residues 364–464 is disordered; the sequence is YVPSGTTDAD…YQPAVTAPEP (101 aa).

Part of a complex containing at least CDYL, MIER1, MIER2, HDAC1 and HDAC2.

Its subcellular location is the nucleus. Transcriptional repressor. This is Mesoderm induction early response protein 2 (MIER2) from Homo sapiens (Human).